We begin with the raw amino-acid sequence, 426 residues long: Tol-Pal system protein TolB (426 aa).

The first 24 residues, 1–24, serve as a signal peptide directing secretion; sequence MKLKSRYTSLISVVSIFFSSMVMA.

This sequence belongs to the TolB family. As to quaternary structure, the Tol-Pal system is composed of five core proteins: the inner membrane proteins TolA, TolQ and TolR, the periplasmic protein TolB and the outer membrane protein Pal. They form a network linking the inner and outer membranes and the peptidoglycan layer.

Its subcellular location is the periplasm. Functionally, part of the Tol-Pal system, which plays a role in outer membrane invagination during cell division and is important for maintaining outer membrane integrity. The protein is Tol-Pal system protein TolB of Haemophilus ducreyi (strain 35000HP / ATCC 700724).